Consider the following 145-residue polypeptide: Bacilliredoxin SAOUHSC_01610 (145 aa).

It belongs to the bacilliredoxin family.

The polypeptide is Bacilliredoxin SAOUHSC_01610 (Staphylococcus aureus (strain NCTC 8325 / PS 47)).